Here is a 668-residue protein sequence, read N- to C-terminus: DNA ligase (668 aa).

Residues 37 to 41 (DAVYD), 86 to 87 (SM), and Glu-116 contribute to the NAD(+) site. The N6-AMP-lysine intermediate role is filled by Lys-118. Arg-139, Glu-173, Lys-288, and Lys-312 together coordinate NAD(+). Positions 406, 409, 424, and 429 each coordinate Zn(2+). Residues 590–668 (APDNFFKEKT…EQEAIAKIEK (79 aa)) form the BRCT domain.

This sequence belongs to the NAD-dependent DNA ligase family. LigA subfamily. The cofactor is Mg(2+). Mn(2+) serves as cofactor.

It carries out the reaction NAD(+) + (deoxyribonucleotide)n-3'-hydroxyl + 5'-phospho-(deoxyribonucleotide)m = (deoxyribonucleotide)n+m + AMP + beta-nicotinamide D-nucleotide.. In terms of biological role, DNA ligase that catalyzes the formation of phosphodiester linkages between 5'-phosphoryl and 3'-hydroxyl groups in double-stranded DNA using NAD as a coenzyme and as the energy source for the reaction. It is essential for DNA replication and repair of damaged DNA. The chain is DNA ligase from Lactobacillus johnsonii (strain CNCM I-12250 / La1 / NCC 533).